Reading from the N-terminus, the 250-residue chain is LexA repressor (250 aa).

A compositionally biased stretch (basic and acidic residues) spans M1–P21. The segment at M1 to R33 is disordered. A DNA-binding region (H-T-H motif) is located at residues V54 to K74. Active-site for autocatalytic cleavage activity residues include S174 and K211.

The protein belongs to the peptidase S24 family. Homodimer.

The catalysed reaction is Hydrolysis of Ala-|-Gly bond in repressor LexA.. Its function is as follows. Represses a number of genes involved in the response to DNA damage (SOS response), including recA and lexA. In the presence of single-stranded DNA, RecA interacts with LexA causing an autocatalytic cleavage which disrupts the DNA-binding part of LexA, leading to derepression of the SOS regulon and eventually DNA repair. This chain is LexA repressor, found in Parafrankia sp. (strain EAN1pec).